A 192-amino-acid chain; its full sequence is T-cell surface glycoprotein CD3 epsilon chain (192 aa).

The first 21 residues, 1 to 21 (MQTGNLWQVLGLCLLLVGAWA), serve as a signal peptide directing secretion. Residues 22–111 (QDDTEQNPYE…RVCKNCMEVN (90 aa)) are Extracellular-facing. Positions 27–98 (QNPYEVSISG…GNTEAAHTLY (72 aa)) constitute an Ig-like domain. The cysteines at positions 43 and 84 are disulfide-linked. The chain crosses the membrane as a helical span at residues 112 to 137 (LLEVATIIVVDICVTLGLLLLVYYWS). The Cytoplasmic segment spans residues 138–192 (KSRKAKATPMTRGAGAGGRPRGQNRERPPPVPNPDYEPIRKGQRDLYSGLNQRGV). The segment at 146–192 (PMTRGAGAGGRPRGQNRERPPPVPNPDYEPIRKGQRDLYSGLNQRGV) is disordered. Residues 160-177 (QNRERPPPVPNPDYEPIR) are NUMB-binding region. The ITAM domain occupies 163-190 (ERPPPVPNPDYEPIRKGQRDLYSGLNQR). The segment at 164–171 (RPPPVPNP) is proline-rich sequence. Phosphotyrosine occurs at positions 173 and 184.

As to quaternary structure, the TCR-CD3 complex is composed of a CD3D/CD3E and a CD3G/CD3E heterodimers that preferentially associate with TCRalpha and TCRbeta, respectively, to form TCRalpha/CD3E/CD3G and TCRbeta/CD3G/CD3E trimers. In turn, the hexamer interacts with CD3Z homodimer to form the TCR-CD3 complex. Alternatively, TCRalpha and TCRbeta can be replaced by TCRgamma and TCRdelta. Interacts with CD6. Interacts (via Proline-rich sequence) with NCK1; the interaction is ligand dependent but independent of tyrosine kinase activation. In terms of processing, phosphorylated on Tyr residues after T-cell receptor triggering by LCK in association with CD4/CD8.

It localises to the cell membrane. Part of the TCR-CD3 complex present on T-lymphocyte cell surface that plays an essential role in adaptive immune response. When antigen presenting cells (APCs) activate T-cell receptor (TCR), TCR-mediated signals are transmitted across the cell membrane by the CD3 chains CD3D, CD3E, CD3G and CD3Z. All CD3 chains contain immunoreceptor tyrosine-based activation motifs (ITAMs) in their cytoplasmic domain. Upon TCR engagement, these motifs become phosphorylated by Src family protein tyrosine kinases LCK and FYN, resulting in the activation of downstream signaling pathways. In addition of this role of signal transduction in T-cell activation, CD3E plays an essential role in correct T-cell development. Also participates in internalization and cell surface down-regulation of TCR-CD3 complexes via endocytosis sequences present in CD3E cytosolic region. In addition to its role as a TCR coreceptor, it serves as a receptor for ITPRIPL1. Ligand recognition inhibits T-cell activation by promoting interaction with NCK1, which prevents CD3E-ZAP70 interaction and blocks the ERK-NFkB signaling cascade and calcium influx. In Ovis aries (Sheep), this protein is T-cell surface glycoprotein CD3 epsilon chain (CD3E).